Here is a 1288-residue protein sequence, read N- to C-terminus: (E3-independent) E2 ubiquitin-conjugating enzyme UBE2O (1288 aa).

2 stretches are compositionally biased toward low complexity: residues 1-26 (MADP…APAA) and 34-47 (ATDS…DSGP). Disordered stretches follow at residues 1 to 51 (MADP…EAGS) and 80 to 109 (EDSD…EGRA). Phosphoserine occurs at positions 45, 82, 84, and 394. Disordered regions lie at residues 396 to 529 (TPDT…KNKV) and 711 to 743 (ESDY…NGLV). The span at 401–418 (CPRDHSMEDPDKKGEARA) shows a compositional bias: basic and acidic residues. Serine 436 carries the phosphoserine modification. Residues 440–450 (MQDEGSEELQE) are compositionally biased toward acidic residues. Positions 462-472 (EGGDDGLHSAE) are enriched in basic and acidic residues. The span at 473–485 (QDADDEAADDTDD) shows a compositional bias: acidic residues. Residues threonine 483 and threonine 486 each carry the phosphothreonine modification. The segment covering 486 to 502 (TSSVTSSASSTTSSQSG) has biased composition (low complexity). Serine 510 is modified (phosphoserine). The span at 517–528 (NLKRKHKRKKNK) shows a compositional bias: basic residues. Residues 717-726 (VEGSSSGASS) show a composition bias toward low complexity. Residues 727-737 (DEWEDDSDSWE) show a composition bias toward acidic residues. Residues 809–879 (RELKEAIKIL…IAEEEKMEAV (71 aa)) adopt a coiled-coil conformation. Position 833 is a phosphoserine (serine 833). The residue at position 835 (threonine 835) is a Phosphothreonine. At serine 836 the chain carries Phosphoserine. Basic and acidic residues predominate over residues 872 to 890 (EEEKMEAVPDTERKEEKPE). The segment at 872–899 (EEEKMEAVPDTERKEEKPEVQSPVKAEW) is disordered. The residue at position 893 (serine 893) is a Phosphoserine. A UBC core domain is found at 950-1110 (KFFSTVRKEM…ALIRVVQSMT (161 aa)). The Glycyl thioester intermediate role is filled by cysteine 1037. Positions 1158–1247 (GALKDSSSLE…RSFLPEKSGY (90 aa)) are disordered.

Belongs to the ubiquitin-conjugating enzyme family. Interacts with CPNE1 (via VWFA domain) and CPNE4 (via VWFA domain). Interacts with UBR2. In terms of processing, phosphorylated. Phosphorylation affects subcellular location. Post-translationally, ubiquitinated: autoubiquitinates, possibly affecting its subcellular location. In terms of tissue distribution, highly expressed in reticulocytes.

It is found in the cytoplasm. The protein localises to the nucleus. It carries out the reaction S-ubiquitinyl-[E1 ubiquitin-activating enzyme]-L-cysteine + [acceptor protein]-L-lysine = [E1 ubiquitin-activating enzyme]-L-cysteine + N(6)-monoubiquitinyl-[acceptor protein]-L-lysine.. Its pathway is protein modification; protein ubiquitination. Inhibited by inorganic arsenite such as phenylarsenoxides. Functionally, E2/E3 hybrid ubiquitin-protein ligase that displays both E2 and E3 ligase activities and mediates monoubiquitination of target proteins. Negatively regulates TRAF6-mediated NF-kappa-B activation independently of its E2 activity. Acts as a positive regulator of BMP7 signaling by mediating monoubiquitination of SMAD6, thereby regulating adipogenesis. Mediates monoubiquitination at different sites of the nuclear localization signal (NLS) of BAP1, leading to cytoplasmic retention of BAP1. Also able to monoubiquitinate the NLS of other chromatin-associated proteins, such as INO80 and CXXC1, affecting their subcellular location. Acts as a regulator of retrograde transport by assisting the TRIM27:MAGEL2 E3 ubiquitin ligase complex to mediate 'Lys-63'-linked ubiquitination of WASHC1, leading to promote endosomal F-actin assembly. This chain is (E3-independent) E2 ubiquitin-conjugating enzyme UBE2O (Ube2o), found in Mus musculus (Mouse).